We begin with the raw amino-acid sequence, 198 residues long: Glycerol-3-phosphate acyltransferase (198 aa).

The next 5 helical transmembrane spans lie at 2 to 22 (YAVL…AYIL), 48 to 70 (LGYK…AVLI), 75 to 97 (MGNT…PVFL), 111 to 131 (VVMT…VTVI), and 154 to 174 (IFWN…LAIF).

This sequence belongs to the PlsY family. Probably interacts with PlsX.

It is found in the cell membrane. The catalysed reaction is an acyl phosphate + sn-glycerol 3-phosphate = a 1-acyl-sn-glycero-3-phosphate + phosphate. It participates in lipid metabolism; phospholipid metabolism. Catalyzes the transfer of an acyl group from acyl-phosphate (acyl-PO(4)) to glycerol-3-phosphate (G3P) to form lysophosphatidic acid (LPA). This enzyme utilizes acyl-phosphate as fatty acyl donor, but not acyl-CoA or acyl-ACP. This chain is Glycerol-3-phosphate acyltransferase, found in Thermoanaerobacter pseudethanolicus (strain ATCC 33223 / 39E) (Clostridium thermohydrosulfuricum).